The primary structure comprises 337 residues: MRDMEMRWAAPAPATRGRGRARRRAPDQPSFSSTLLDAICDSMDEGGEDGRTRNAASAAAKKRQEAANSYHYYYCYKPSLAASYRAAPALGSTADCPGRGYFSSSEVEYSLRRLRPIRTSAAGGAGDGAAVARKQRHEQPDVEKTAKTKPGSASARACRRPASPGARLASLLNSIFSGKRPSAQRPACSPDYPEPACSTAPPSSSSSYARRPCHAKTLRTPPTTTTTARARPSRSRTVRFLDIDGKVAVAAAVAGCRRIPVMEVEADTDDGGEESSDASSDLFELDSLAAIAPAGGRDGSHGDELPVYGTTGVGIRRDIGRRRPYGHAPCRSWSRAV.

Disordered stretches follow at residues 1–32 (MRDMEMRWAAPAPATRGRGRARRRAPDQPSFS), 120–163 (SAAG…RPAS), and 179–233 (KRPS…ARPS). Basic and acidic residues predominate over residues 137-146 (HEQPDVEKTA). Composition is skewed to low complexity over residues 150-163 (PGSASARACRRPAS), 195-209 (PACSTAPPSSSSSYA), and 219-230 (RTPPTTTTTARA).

It belongs to the BIG GRAIN 1 (BG1) plant protein family.

It localises to the cell membrane. Its function is as follows. Involved in auxin transport. Regulator of the auxin signaling pathway. The sequence is that of Protein BIG GRAIN 1-like from Oryza sativa subsp. indica (Rice).